A 193-amino-acid chain; its full sequence is Potassium-transporting ATPase KdpC subunit (193 aa).

A helical membrane pass occupies residues 14 to 34 (ITFTFLVLCGLVYPLIVTGIA).

The protein belongs to the KdpC family. The system is composed of three essential subunits: KdpA, KdpB and KdpC.

It is found in the cell membrane. Part of the high-affinity ATP-driven potassium transport (or Kdp) system, which catalyzes the hydrolysis of ATP coupled with the electrogenic transport of potassium into the cytoplasm. This subunit acts as a catalytic chaperone that increases the ATP-binding affinity of the ATP-hydrolyzing subunit KdpB by the formation of a transient KdpB/KdpC/ATP ternary complex. The protein is Potassium-transporting ATPase KdpC subunit of Bacillus thuringiensis subsp. konkukian (strain 97-27).